The sequence spans 532 residues: Phosphoenolpyruvate carboxylase (532 aa).

Belongs to the PEPCase type 2 family. As to quaternary structure, homotetramer. It depends on Mg(2+) as a cofactor.

It catalyses the reaction oxaloacetate + phosphate = phosphoenolpyruvate + hydrogencarbonate. Its function is as follows. Catalyzes the irreversible beta-carboxylation of phosphoenolpyruvate (PEP) to form oxaloacetate (OAA), a four-carbon dicarboxylic acid source for the tricarboxylic acid cycle. The chain is Phosphoenolpyruvate carboxylase from Methanopyrus kandleri (strain AV19 / DSM 6324 / JCM 9639 / NBRC 100938).